We begin with the raw amino-acid sequence, 240 residues long: Probable ATP synthase 24 kDa subunit, mitochondrial (240 aa).

The N-terminal 32 residues, 1–32, are a transit peptide targeting the mitochondrion; sequence MAYASRFLSRSKQLQGGLVILQQQHAIPVRAF. Basic and acidic residues-rich tracts occupy residues 210 to 222 and 229 to 240; these read AVEAMESQKKKEE and PDVKSLDIRNFI. The disordered stretch occupies residues 210–240; that stretch reads AVEAMESQKKKEEFQDEEMPDVKSLDIRNFI.

Its subcellular location is the mitochondrion. It is found in the mitochondrion inner membrane. Mitochondrial membrane ATP synthase (F(1)F(0) ATP synthase or Complex V) produces ATP from ADP in the presence of a proton gradient across the membrane which is generated by electron transport complexes of the respiratory chain. F-type ATPases consist of two structural domains, F(1) - containing the extramembraneous catalytic core and F(0) - containing the membrane proton channel, linked together by a central stalk and a peripheral stalk. During catalysis, ATP synthesis in the catalytic domain of F(1) is coupled via a rotary mechanism of the central stalk subunits to proton translocation. Part of the complex F(0) domain. The sequence is that of Probable ATP synthase 24 kDa subunit, mitochondrial from Arabidopsis thaliana (Mouse-ear cress).